The chain runs to 226 residues: Triosephosphate isomerase (226 aa).

The active-site Electrophile is the His-91. Glu-163 serves as the catalytic Proton acceptor. Substrate is bound by residues Gly-169 and Ser-207.

It belongs to the triosephosphate isomerase family. As to quaternary structure, homodimer.

The protein resides in the cytoplasm. The catalysed reaction is D-glyceraldehyde 3-phosphate = dihydroxyacetone phosphate. It participates in carbohydrate biosynthesis; gluconeogenesis. The protein operates within carbohydrate degradation; glycolysis; D-glyceraldehyde 3-phosphate from glycerone phosphate: step 1/1. Involved in the gluconeogenesis. Catalyzes stereospecifically the conversion of dihydroxyacetone phosphate (DHAP) to D-glyceraldehyde-3-phosphate (G3P). In Rhizobium etli (strain ATCC 51251 / DSM 11541 / JCM 21823 / NBRC 15573 / CFN 42), this protein is Triosephosphate isomerase.